Consider the following 298-residue polypeptide: MANAKEIRGQIKSVKNTRKITRAMEMVAASKMRRAQERMRAARPCAEKIREVLGHLAQAHPEYEHPLMQVRPVKKAGFLVVTTDRGLCGGLNVNVLRNVVQKMRELHEEGVESNLAVVGNKGLGFLRRHGAHLVADVNGLGDSPHLGDMIGPIRAMADAYAKGEVDVVYLVSSRFVNTMLQRATVEQLLPVEKPTASAEQRAELWDYIYEPEARPVLDRLMQRYVESVVYQAVIEHLACEQSARMVAMKSASDNAKRMVDDLQLAYNKARQAAITQEIAEISAGAARFDDCAQHFWKF.

This sequence belongs to the ATPase gamma chain family. F-type ATPases have 2 components, CF(1) - the catalytic core - and CF(0) - the membrane proton channel. CF(1) has five subunits: alpha(3), beta(3), gamma(1), delta(1), epsilon(1). CF(0) has three main subunits: a, b and c.

The protein resides in the cell inner membrane. Its function is as follows. Produces ATP from ADP in the presence of a proton gradient across the membrane. The gamma chain is believed to be important in regulating ATPase activity and the flow of protons through the CF(0) complex. The polypeptide is ATP synthase gamma chain (Acidithiobacillus ferridurans).